Here is a 208-residue protein sequence, read N- to C-terminus: Probable nicotinate-nucleotide adenylyltransferase (208 aa).

The protein belongs to the NadD family.

It catalyses the reaction nicotinate beta-D-ribonucleotide + ATP + H(+) = deamido-NAD(+) + diphosphate. It functions in the pathway cofactor biosynthesis; NAD(+) biosynthesis; deamido-NAD(+) from nicotinate D-ribonucleotide: step 1/1. Catalyzes the reversible adenylation of nicotinate mononucleotide (NaMN) to nicotinic acid adenine dinucleotide (NaAD). The protein is Probable nicotinate-nucleotide adenylyltransferase of Trichormus variabilis (strain ATCC 29413 / PCC 7937) (Anabaena variabilis).